A 389-amino-acid polypeptide reads, in one-letter code: Alpha-(1,3)-fucosyltransferase 7 (389 aa).

Topologically, residues 1–55 (MPTPCPPACLSTPGTHRLLPFPDWKAPSWESRKEATCNSSSPGPWAEPTVQGYHP) are cytoplasmic. The helical; Signal-anchor for type II membrane protein transmembrane segment at 56–78 (TRRLRAWGGLAGGATFMVIWFFW) threads the bilayer. The Lumenal portion of the chain corresponds to 79–389 (LWGSAPGSAP…YEDLESWFQA (311 aa)). An intrachain disulfide couples C115 to C123. An N-linked (GlcNAc...) asparagine glycan is attached at N128. C258 and C261 are oxidised to a cystine. N338 carries an N-linked (GlcNAc...) asparagine glycan. A disulfide bridge connects residues C365 and C368.

It belongs to the glycosyltransferase 10 family. N-glycosylated. In terms of tissue distribution, highly expressed in lung and bone marrow and to a much lesser extent in spleen, salivary gland and skeletal muscle.

It localises to the golgi apparatus. It is found in the golgi stack membrane. It catalyses the reaction an N-acetyl-alpha-neuraminyl-(2-&gt;3)-beta-D-galactosyl-(1-&gt;4)-N-acetyl-beta-D-glucosaminyl derivative + GDP-beta-L-fucose = an alpha-Neu5Ac-(2-&gt;3)-beta-D-Gal-(1-&gt;4)-[alpha-L-Fuc-(1-&gt;3)]-beta-D-GlcNAc derivative + GDP + H(+). The catalysed reaction is an alpha-Neu5Ac-(2-&gt;3)-beta-D-Gal-(1-&gt;4)-beta-D-GlcNAc6S derivative + GDP-beta-L-fucose = an alpha-Neu5Ac-(2-&gt;3)-beta-D-Gal-(1-&gt;4)-[alpha-L-Fuc-(1-&gt;3)]-beta-D-GlcNAc6S derivative + GDP + H(+). The enzyme catalyses a neolactoside IV(3)-alpha-NeuAc-nLc4Cer + GDP-beta-L-fucose = a neolactoside IV(3)-alpha-NeuNAc,III(3)-alpha-Fuc-nLc4Cer + GDP + H(+). It carries out the reaction a neolactoside VI(3)-alpha-NeuNAc-nLc6Cer + GDP-beta-L-fucose = a neolactoside VI(3)-alpha-NeuAc,V(3)-alphaFuc-nLc6Cer + GDP + H(+). It catalyses the reaction an alpha-Neu5Ac-(2-&gt;3)-beta-D-Gal-(1-&gt;4)-beta-D-GlcNAc-(1-&gt;3)-beta-D-Gal-(1-&gt;4)-[alpha-L-Fuc-(1-&gt;3)]-beta-D-GlcNAc derivative + GDP-beta-L-fucose = an alpha-Neu5Ac-(2-&gt;3)-beta-D-Gal-(1-&gt;4)-[alpha-L-Fuc-(1-&gt;3)]-beta-D-GlcNAc-(1-&gt;3)-beta-D-Gal-(1-&gt;4)-[alpha-L-Fuc-(1-&gt;3)]-beta-D-GlcNAc derivative + GDP + H(+). The catalysed reaction is alpha-Neu5Ac-(2-&gt;3)-beta-D-Gal-(1-&gt;4)-beta-D-GlcNAc-(1-&gt;3)-beta-D-Gal-(1-&gt;4)-D-Glc + GDP-beta-L-fucose = alpha-Neu5Ac-(2-&gt;3)-beta-D-Gal-(1-&gt;4)-[alpha-L-Fuc-(1-&gt;3)]-beta-D-GlcNAc-(1-&gt;3)-beta-D-Gal-(1-&gt;4)-D-Glc + GDP + H(+). The enzyme catalyses alpha-Neu5Ac-(2-&gt;3)-beta-D-Gal-(1-&gt;4)-beta-D-GlcNAc-(1-&gt;3)-beta-D-Gal-(1-&gt;4)-[alpha-L-Fuc-(1-&gt;3)]-beta-D-GlcNAc-(1-&gt;3)-beta-D-Gal-(1-&gt;4)-beta-D-GlcNAc + GDP-beta-L-fucose = alpha-Neu5Ac-(2-&gt;3)-beta-D-Gal-(1-&gt;4)-[alpha-L-Fuc-(1-&gt;3)]-beta-D-GlcNAc-(1-&gt;3)-beta-D-Gal-(1-&gt;4)-[alpha-L-Fuc-(1-&gt;3)]-beta-D-GlcNAc-(1-&gt;3)-beta-D-Gal-(1-&gt;4)-beta-D-GlcNAc + GDP + H(+). It carries out the reaction alpha-Neu5Ac-(2-&gt;3)-beta-D-Gal-(1-&gt;4)-beta-D-GlcNAc-(1-&gt;3)-beta-D-Gal-(1-&gt;4)-beta-D-GlcNAc-(1-&gt;3)-beta-D-Gal-(1-&gt;4)-beta-D-GlcNAc + GDP-beta-L-fucose = alpha-Neu5Ac-(2-&gt;3)-beta-D-Gal-(1-&gt;4)-[alpha-L-Fuc-(1-&gt;3)]-beta-D-GlcNAc-(1-&gt;3)-beta-D-Gal-(1-&gt;4)-beta-D-GlcNAc-(1-&gt;3)-beta-D-Gal-(1-&gt;4)-beta-D-GlcNAc + GDP + H(+). The protein operates within protein modification; protein glycosylation. Its activity is regulated as follows. Inhibited by NaCl. Inhibited by GDP in a concentration dependent manner, with an IC(50) value of 93 uM. Also inhibited by GMP and GTP. Inhibited by N-ethylmaleimide. Activated by poly(ethylene glycol) by enhancing the thermal stability of FUT7. Activated by Mn2+, Ca2+, and Mg2+. Both panosialin A and B inhibit activity with IC(50) values of 4.8 and 5.3 ug/ml, respectively. Inhibited by gallic acid (GA) and (-)-epigallocatechin gallate (EGCG) in a time-dependent and irreversible manner with IC(50) values of 60 and 700 nM, respectively. In terms of biological role, catalyzes the transfer of L-fucose, from a guanosine diphosphate-beta-L-fucose, to the N-acetyl glucosamine (GlcNAc) of a distal alpha2,3 sialylated lactosamine unit of a glycoprotein or a glycolipid-linked sialopolylactosamines chain through an alpha-1,3 glycosidic linkage and participates in the final fucosylation step in the biosynthesis of the sialyl Lewis X (sLe(x)), a carbohydrate involved in cell and matrix adhesion during leukocyte trafficking and fertilization. In vitro, also synthesizes sialyl-dimeric-Lex structures, from VIM-2 structures and both di-fucosylated and trifucosylated structures from mono-fucosylated precursors. However does not catalyze alpha 1-3 fucosylation when an internal alpha 1-3 fucosylation is present in polylactosamine chain and the fucosylation rate of the internal GlcNAc residues is reduced once fucose has been added to the distal GlcNAc. Also catalyzes the transfer of a fucose from GDP-beta-fucose to the 6-sulfated a(2,3)sialylated substrate to produce 6-sulfo sLex mediating significant L-selectin-dependent cell adhesion. Through sialyl-Lewis(x) biosynthesis, can control SELE- and SELP-mediated cell adhesion with leukocytes and allows leukocytes tethering and rolling along the endothelial tissue thereby enabling the leukocytes to accumulate at a site of inflammation. May enhance embryo implantation through sialyl Lewis X (sLeX)-mediated adhesion of embryo cells to endometrium. May affect insulin signaling by up-regulating the phosphorylation and expression of some signaling molecules involved in the insulin-signaling pathway through SLe(x) which is present on the glycans of the INSRR alpha subunit. The protein is Alpha-(1,3)-fucosyltransferase 7 of Mus musculus (Mouse).